A 220-amino-acid polypeptide reads, in one-letter code: Protein GrpE (220 aa).

Residues Met1 to Glu55 form a disordered region.

It belongs to the GrpE family. Homodimer.

The protein localises to the cytoplasm. Its function is as follows. Participates actively in the response to hyperosmotic and heat shock by preventing the aggregation of stress-denatured proteins, in association with DnaK and GrpE. It is the nucleotide exchange factor for DnaK and may function as a thermosensor. Unfolded proteins bind initially to DnaJ; upon interaction with the DnaJ-bound protein, DnaK hydrolyzes its bound ATP, resulting in the formation of a stable complex. GrpE releases ADP from DnaK; ATP binding to DnaK triggers the release of the substrate protein, thus completing the reaction cycle. Several rounds of ATP-dependent interactions between DnaJ, DnaK and GrpE are required for fully efficient folding. This is Protein GrpE from Treponema pallidum (strain Nichols).